The following is a 262-amino-acid chain: Hydroxyethylthiazole kinase (262 aa).

Methionine 50 is a binding site for substrate. ATP contacts are provided by arginine 125 and threonine 171. Glycine 198 is a substrate binding site.

This sequence belongs to the Thz kinase family. The cofactor is Mg(2+).

It catalyses the reaction 5-(2-hydroxyethyl)-4-methylthiazole + ATP = 4-methyl-5-(2-phosphooxyethyl)-thiazole + ADP + H(+). The protein operates within cofactor biosynthesis; thiamine diphosphate biosynthesis; 4-methyl-5-(2-phosphoethyl)-thiazole from 5-(2-hydroxyethyl)-4-methylthiazole: step 1/1. Its function is as follows. Catalyzes the phosphorylation of the hydroxyl group of 4-methyl-5-beta-hydroxyethylthiazole (THZ). This Escherichia coli O45:K1 (strain S88 / ExPEC) protein is Hydroxyethylthiazole kinase.